Here is a 698-residue protein sequence, read N- to C-terminus: Topoisomerase subunit TopoN (698 aa).

An Isoglutamyl lysine isopeptide (Lys-Gln) (interchain with Q-Cter in protein Pup) cross-link involves residue lysine 429. A disordered region spans residues 443 to 473 (GAKARARAASKAKGLGTNLSLPPKLLPSRES). In terms of domain architecture, Toprim spans 479 to 593 (AELFLCEGDS…AGMVYVTMPP (115 aa)).

Belongs to the type II topoisomerase family. In terms of assembly, a complex of TopoN and TopoM, possibly a heterotetramer. The cofactor is Mg(2+).

It carries out the reaction ATP-dependent breakage, passage and rejoining of double-stranded DNA.. With respect to regulation, inhibited by quinolone antibiotic ciprofloxacin and coumarin antibiotic novobiocin, but at much higher concentrations than is usual for DNA gyrase/topoisomerase. Functionally, catalyzes the relaxation of negatively supercoiled DNA in the presence of ATP or dATP but not other nucleotides. Individual subunits have no activity. Not able to negatively supercoil DNA, it can however introduce positive supercoils in DNA. Relaxes positive supercoils in an ATP-dependent manner. Catenates and decatenates DNA. Generates dsDNA breaks in the presence of the quinolone antibiotic ciprofloxacin, showing it is a topoisomerase. In Mycolicibacterium smegmatis (strain ATCC 700084 / mc(2)155) (Mycobacterium smegmatis), this protein is Topoisomerase subunit TopoN.